The following is a 347-amino-acid chain: Nuclear distribution protein nudE-like 1 (347 aa).

The stretch at glutamine 28–valine 190 forms a coiled coil. Residues valine 56 to serine 166 form a self-association region. The segment at aspartate 64–glutamate 189 is interaction with KATNB1. The tract at residues tyrosine 114 to isoleucine 133 is required for interaction with PAFAH1B1. Residues arginine 175–valine 347 are interaction with CENPF. The segment at glutamate 189 to valine 256 is interaction with YWHAE. The tract at residues threonine 191–valine 347 is interaction with NEFL. Residues alanine 195–valine 256 are interaction with KATNA1. Serine 215 is modified (phosphoserine). At threonine 219 the chain carries Phosphothreonine; by CDK1 and MAPK1. Phosphoserine is present on serine 231. Positions threonine 241 to glutamine 280 are interaction with DISC1. Residue serine 242 is modified to Phosphoserine; by CDK1. A Phosphothreonine; by CDK1 and MAPK1 modification is found at threonine 245. Residues valine 256–valine 291 are required for localization to the centrosome and interaction with dynein, dynactin, tubulin gamma, PCM1 and PCNT. Cysteine 273 carries S-palmitoyl cysteine; by ZDHHC2, ZDHHC3 and ZDHHC7 lipidation. Residues lysine 314–valine 347 form a disordered region. Phosphoserine is present on serine 346.

It belongs to the nudE family. As to quaternary structure, self-associates. Interacts with DISC1, dynein, dynactin, tubulin gamma, KATNA1, KATNB1, microtubules, PAFAH1B1, PCM1, PCNT, and YWHAE. Interacts directly with NEFL and indirectly with NEFH. Interacts (via C-terminus) with CENPF. Interacts with ZNF365. Interacts with PLEKHM1 (via N- and C-terminus). Interacts with GTP-bound RAB9A; the interaction may lead to RAB9A-dynein motor tethering. Phosphorylated in mitosis. Can be phosphorylated by CDK1, CDK5 and MAPK1. Phosphorylation by CDK5 promotes interaction with KATNA1 and YWHAE. Post-translationally, palmitoylation at Cys-273 reduces affinity for dynein.

The protein resides in the cytoplasm. It is found in the cytoskeleton. Its subcellular location is the microtubule organizing center. The protein localises to the centrosome. It localises to the chromosome. The protein resides in the centromere. It is found in the kinetochore. Its subcellular location is the spindle. In terms of biological role, required for organization of the cellular microtubule array and microtubule anchoring at the centrosome. May regulate microtubule organization at least in part by targeting the microtubule severing protein KATNA1 to the centrosome. Also positively regulates the activity of the minus-end directed microtubule motor protein dynein. May enhance dynein-mediated microtubule sliding by targeting dynein to the microtubule plus ends. Required for several dynein- and microtubule-dependent processes such as the maintenance of Golgi integrity, the centripetal motion of secretory vesicles and the coupling of the nucleus and centrosome. Also required during brain development for the migration of newly formed neurons from the ventricular/subventricular zone toward the cortical plate. Required for mitosis in some cell types but appears to be dispensible for mitosis in cortical neuronal progenitors, which instead requires NDE1. Facilitates the polymerization of neurofilaments from the individual subunits NEFH and NEFL. Positively regulates lysosome peripheral distribution and ruffled border formation in osteoclasts. Plays a role, together with DISC1, in the regulation of neurite outgrowth. May act as a RAB9A/B effector that tethers RAB9-associated late endosomes to the dynein motor for their retrograde transport to the trans-Golgi network. This is Nuclear distribution protein nudE-like 1 (NDEL1) from Macaca fascicularis (Crab-eating macaque).